The following is a 200-amino-acid chain: Large ribosomal subunit protein uL4 (200 aa).

The disordered stretch occupies residues 38–80; it reads GRQGSKQQKTRSDVSGGGKRPWRQKGTGRARAGTTRGPIWRGG.

The protein belongs to the universal ribosomal protein uL4 family. Part of the 50S ribosomal subunit.

One of the primary rRNA binding proteins, this protein initially binds near the 5'-end of the 23S rRNA. It is important during the early stages of 50S assembly. It makes multiple contacts with different domains of the 23S rRNA in the assembled 50S subunit and ribosome. Functionally, forms part of the polypeptide exit tunnel. The protein is Large ribosomal subunit protein uL4 of Stutzerimonas stutzeri (strain A1501) (Pseudomonas stutzeri).